The primary structure comprises 356 residues: Methionine import ATP-binding protein MetN 1 (356 aa).

The ABC transporter domain occupies 2–241 (IELKNISVTF…PQQPLTKDFI (240 aa)). Residue 38-45 (GYSGAGKS) participates in ATP binding.

It belongs to the ABC transporter superfamily. Methionine importer (TC 3.A.1.24) family. In terms of assembly, the complex is composed of two ATP-binding proteins (MetN), two transmembrane proteins (MetI) and a solute-binding protein (MetQ).

The protein localises to the cell membrane. It carries out the reaction L-methionine(out) + ATP + H2O = L-methionine(in) + ADP + phosphate + H(+). The enzyme catalyses D-methionine(out) + ATP + H2O = D-methionine(in) + ADP + phosphate + H(+). In terms of biological role, part of the ABC transporter complex MetNIQ involved in methionine import. Responsible for energy coupling to the transport system. In Enterococcus faecalis (strain ATCC 700802 / V583), this protein is Methionine import ATP-binding protein MetN 1.